Here is a 631-residue protein sequence, read N- to C-terminus: Chaperone protein DnaK (631 aa).

A Phosphothreonine; by autocatalysis modification is found at Thr-197. The interval Lys-600–Glu-631 is disordered.

The protein belongs to the heat shock protein 70 family.

Functionally, acts as a chaperone. This Wolinella succinogenes (strain ATCC 29543 / DSM 1740 / CCUG 13145 / JCM 31913 / LMG 7466 / NCTC 11488 / FDC 602W) (Vibrio succinogenes) protein is Chaperone protein DnaK.